A 308-amino-acid chain; its full sequence is tRNA pseudouridine synthase B (308 aa).

Asp-48 (nucleophile) is an active-site residue.

Belongs to the pseudouridine synthase TruB family. Type 1 subfamily.

It carries out the reaction uridine(55) in tRNA = pseudouridine(55) in tRNA. In terms of biological role, responsible for synthesis of pseudouridine from uracil-55 in the psi GC loop of transfer RNAs. This Histophilus somni (strain 129Pt) (Haemophilus somnus) protein is tRNA pseudouridine synthase B.